Here is a 149-residue protein sequence, read N- to C-terminus: L-alanine exporter AlaE (149 aa).

The next 4 helical transmembrane spans lie at 16–36, 46–66, 85–105, and 112–132; these read FAMV…LSGM, LVAI…RDLF, ILAY…VVGA, and AAVS…GYFL.

This sequence belongs to the AlaE exporter family.

It is found in the cell inner membrane. Exports L-alanine. This Shigella flexneri protein is L-alanine exporter AlaE.